The chain runs to 201 residues: Dephospho-CoA kinase (201 aa).

One can recognise a DPCK domain in the interval Ser-4–Gln-201. Position 12-17 (Ala-12–Thr-17) interacts with ATP.

The protein belongs to the CoaE family.

The protein resides in the cytoplasm. The enzyme catalyses 3'-dephospho-CoA + ATP = ADP + CoA + H(+). It participates in cofactor biosynthesis; coenzyme A biosynthesis; CoA from (R)-pantothenate: step 5/5. Catalyzes the phosphorylation of the 3'-hydroxyl group of dephosphocoenzyme A to form coenzyme A. In Legionella pneumophila subsp. pneumophila (strain Philadelphia 1 / ATCC 33152 / DSM 7513), this protein is Dephospho-CoA kinase.